Reading from the N-terminus, the 795-residue chain is Phenylalanine--tRNA ligase beta subunit (795 aa).

One can recognise a tRNA-binding domain in the interval 39–148 (AGSFHGVVVG…ADAPIGTDIR (110 aa)). A B5 domain is found at 401-476 (PKRATITLRR…RVYGYNNIPD (76 aa)). Mg(2+)-binding residues include D454, D460, E463, and E464. Residues 701 to 794 (SRFPANRRDI…LKERFQASLR (94 aa)) enclose the FDX-ACB domain.

It belongs to the phenylalanyl-tRNA synthetase beta subunit family. Type 1 subfamily. Tetramer of two alpha and two beta subunits. Mg(2+) serves as cofactor.

The protein localises to the cytoplasm. The catalysed reaction is tRNA(Phe) + L-phenylalanine + ATP = L-phenylalanyl-tRNA(Phe) + AMP + diphosphate + H(+). This is Phenylalanine--tRNA ligase beta subunit (pheT) from Escherichia coli (strain K12).